Here is a 722-residue protein sequence, read N- to C-terminus: D-(-)-3-hydroxybutyrate oligomer hydrolase (722 aa).

The first 25 residues, 1-25, serve as a signal peptide directing secretion; that stretch reads MKTMQGKGSGRRLRGALLVTMAASG. Catalysis depends on Ser319, which acts as the Charge relay system.

Belongs to the D-(-)-3-hydroxybutyrate oligomer hydrolase family.

Its subcellular location is the secreted. The enzyme catalyses (3R)-hydroxybutanoate dimer + H2O = 2 (R)-3-hydroxybutanoate + H(+). The protein operates within lipid metabolism; butanoate metabolism. With respect to regulation, inhibited by diisopropylfluorophosphate (DFP). Its function is as follows. Participates in the degradation of poly-3-hydroxybutyrate (PHB). It works downstream of poly(3-hydroxybutyrate) depolymerase, hydrolyzing D(-)-3-hydroxybutyrate oligomers of various length (3HB-oligomers) into 3HB-monomers. The chain is D-(-)-3-hydroxybutyrate oligomer hydrolase from Ralstonia pickettii (Burkholderia pickettii).